Consider the following 80-residue polypeptide: Small ribosomal subunit protein bS18 (80 aa).

Belongs to the bacterial ribosomal protein bS18 family. Part of the 30S ribosomal subunit. Forms a tight heterodimer with protein bS6.

Its function is as follows. Binds as a heterodimer with protein bS6 to the central domain of the 16S rRNA, where it helps stabilize the platform of the 30S subunit. This is Small ribosomal subunit protein bS18 from Staphylococcus saprophyticus subsp. saprophyticus (strain ATCC 15305 / DSM 20229 / NCIMB 8711 / NCTC 7292 / S-41).